Here is a 628-residue protein sequence, read N- to C-terminus: Putative ankyrin repeat protein L769 (628 aa).

4 ANK repeats span residues 217-246 (NYMD…EYDF), 333-362 (DLDE…DINR), 421-451 (TAEN…NHDL), and 512-542 (NNLK…DQDY).

This Acanthamoeba polyphaga mimivirus (APMV) protein is Putative ankyrin repeat protein L769.